A 36-amino-acid chain; its full sequence is Kappa-theraphotoxin-Pg1b (36 aa).

3 disulfides stabilise this stretch: C4–C19, C11–C24, and C18–C31.

The protein belongs to the neurotoxin 10 (Hwtx-1) family. 44 (Jztx-4) subfamily. In terms of tissue distribution, expressed by the venom gland.

The protein resides in the secreted. Gating modifier of Kv2.1/KCNB1, Kv2.2/KCNB2 and Kv4.3/KCND3 channels. This is Kappa-theraphotoxin-Pg1b from Chilobrachys guangxiensis (Chinese earth tiger tarantula).